Here is a 58-residue protein sequence, read N- to C-terminus: Metallothionein-2B (58 aa).

The segment at 1–29 is beta; it reads MPDPCCNDKCECKEGECKTGCKCKSCRCP. A divalent metal cation is bound by residues cysteine 5, cysteine 6, cysteine 10, cysteine 12, cysteine 17, cysteine 21, cysteine 23, cysteine 26, cysteine 28, cysteine 31, cysteine 34, cysteine 38, cysteine 40, cysteine 46, cysteine 50, cysteine 54, cysteine 56, and cysteine 57. Residues 30–58 are alpha; sequence PCDKCSSECKCTSKEECSKTCSKPCSCCP.

This sequence belongs to the metallothionein superfamily. Type 3 family.

In terms of biological role, binds six divalent metal ions. Known to bind copper and cadmium. The sequence is that of Metallothionein-2B from Callinectes sapidus (Blue crab).